Reading from the N-terminus, the 444-residue chain is Ras-related protein RabX (444 aa).

29 to 36 provides a ligand contact to GTP; it reads GGDVCSKN. The Effector region motif lies at 51–58; the sequence is LIQVFDDY. 73–77 serves as a coordination point for GTP; the sequence is EFSSI. The segment at 91-136 is disordered; that stretch reads ENNKNKNNNNNYNYNNNNYNNNNNNNNNNNNNNNNNNNNNNNNNNS. Low complexity predominate over residues 95 to 135; the sequence is NKNNNNNYNYNNNNYNNNNNNNNNNNNNNNNNNNNNNNNNN. A GTP-binding site is contributed by 207–210; that stretch reads NDSN. Disordered regions lie at residues 213–232 and 298–401; these read TPNF…SNII and LQGD…NNDL. Composition is skewed to low complexity over residues 217–232 and 303–399; these read SDSS…SNII and NNNN…TYNN. Cysteine 439 carries S-palmitoyl cysteine lipidation. The residue at position 441 (cysteine 441) is a Cysteine methyl ester. A lipid anchor (S-geranylgeranyl cysteine) is attached at cysteine 441. The propeptide at 442 to 444 is removed in mature form; that stretch reads NLM.

This sequence belongs to the small GTPase superfamily. Rab family.

Its subcellular location is the cell membrane. The chain is Ras-related protein RabX (rabX) from Dictyostelium discoideum (Social amoeba).